The following is a 331-amino-acid chain: Glyceraldehyde-3-phosphate dehydrogenase, cytosolic (331 aa).

NAD(+)-binding positions include 12–13 (RI), Asp-34, and Arg-78. Residues 149-151 (SCT), Thr-180, 209-210 (TG), and Arg-232 each bind D-glyceraldehyde 3-phosphate. Cys-150 acts as the Nucleophile in catalysis. Asn-314 lines the NAD(+) pocket.

This sequence belongs to the glyceraldehyde-3-phosphate dehydrogenase family. In terms of assembly, homotetramer.

It is found in the cytoplasm. The enzyme catalyses D-glyceraldehyde 3-phosphate + phosphate + NAD(+) = (2R)-3-phospho-glyceroyl phosphate + NADH + H(+). The protein operates within carbohydrate degradation; glycolysis; pyruvate from D-glyceraldehyde 3-phosphate: step 1/5. The sequence is that of Glyceraldehyde-3-phosphate dehydrogenase, cytosolic from Trypanosoma brucei brucei.